Here is a 142-residue protein sequence, read N- to C-terminus: Hemoglobin subunit alpha-A (142 aa).

The Globin domain occupies 2 to 142 (VLSAADKNNV…VGTVLTAKYR (141 aa)). H59 lines the O2 pocket. A heme b-binding site is contributed by H88.

It belongs to the globin family. As to quaternary structure, heterotetramer of two alpha chains and two beta chains. Red blood cells.

Its function is as follows. Involved in oxygen transport from the lung to the various peripheral tissues. The sequence is that of Hemoglobin subunit alpha-A (HBAA) from Meleagris gallopavo (Wild turkey).